The following is a 1455-amino-acid chain: DNA-directed RNA polymerase subunit beta (1455 aa).

The protein belongs to the RNA polymerase beta chain family. As to quaternary structure, the RNAP catalytic core consists of 2 alpha, 1 beta, 1 beta' and 1 omega subunit. When a sigma factor is associated with the core the holoenzyme is formed, which can initiate transcription.

The enzyme catalyses RNA(n) + a ribonucleoside 5'-triphosphate = RNA(n+1) + diphosphate. In terms of biological role, DNA-dependent RNA polymerase catalyzes the transcription of DNA into RNA using the four ribonucleoside triphosphates as substrates. In Rhizorhabdus wittichii (strain DSM 6014 / CCUG 31198 / JCM 15750 / NBRC 105917 / EY 4224 / RW1) (Sphingomonas wittichii), this protein is DNA-directed RNA polymerase subunit beta.